The primary structure comprises 133 residues: Large ribosomal subunit protein uL15 (133 aa).

Residues 1 to 60 (MALENLKPAQGSTKDRKRVGRGQGSGMGKTSTRGGKGQTARTGYKAKRGFEGGQQPLQRR) are disordered.

It belongs to the universal ribosomal protein uL15 family. As to quaternary structure, part of the 50S ribosomal subunit.

Functionally, binds to the 23S rRNA. This is Large ribosomal subunit protein uL15 from Wolinella succinogenes (strain ATCC 29543 / DSM 1740 / CCUG 13145 / JCM 31913 / LMG 7466 / NCTC 11488 / FDC 602W) (Vibrio succinogenes).